The sequence spans 358 residues: Low-specificity L-threonine aldolase 1 (358 aa).

Lysine 207 bears the N6-(pyridoxal phosphate)lysine mark.

This sequence belongs to the threonine aldolase family. Requires pyridoxal 5'-phosphate as cofactor. In terms of tissue distribution, expressed in root tips, seedlings, carpels and seeds.

It catalyses the reaction L-threonine = acetaldehyde + glycine. It carries out the reaction L-allo-threonine = acetaldehyde + glycine. The protein operates within amino-acid degradation; L-threonine degradation via aldolase pathway; acetaldehyde and glycine from L-threonine: step 1/1. Functionally, threonine aldolase involved in threonine degradation to glycine. May play a role in the removal of L-allo-threonine. The protein is Low-specificity L-threonine aldolase 1 of Arabidopsis thaliana (Mouse-ear cress).